The following is an 813-amino-acid chain: Probable receptor-like protein kinase At5g39020 (813 aa).

The N-terminal stretch at 1–21 (MNCNVLFLLSVLVSVTAGVTA) is a signal peptide. At 22 to 437 (AYHPTDVFLF…TPPIKGKPHV (416 aa)) the chain is on the extracellular side. N-linked (GlcNAc...) asparagine glycans are attached at residues Asn-46, Asn-61, Asn-165, Asn-202, Asn-213, Asn-263, Asn-286, Asn-293, Asn-384, and Asn-401. Residues 438–458 (LVIILIVVGSVIGLATFIVII) traverse the membrane as a helical segment. Over 459–813 (MLLIRQMKRK…QTQTLDSTII (355 aa)) the chain is Cytoplasmic. The 276-residue stretch at 496–771 (KSFSHTVGKG…KVVEMIEGSL (276 aa)) folds into the Protein kinase domain. ATP-binding positions include 502 to 510 (VGKGGFGTV) and Lys-524. The active-site Proton acceptor is Asp-619. Residues 791-813 (ESSSLSDGQEAEKQTQTLDSTII) form a disordered region. Residues 804–813 (QTQTLDSTII) show a composition bias toward polar residues.

It belongs to the protein kinase superfamily. Ser/Thr protein kinase family.

The protein localises to the membrane. This is Probable receptor-like protein kinase At5g39020 from Arabidopsis thaliana (Mouse-ear cress).